A 161-amino-acid polypeptide reads, in one-letter code: MRLKDAIPKKGSQQRGRRVGRGISAGQGASCGKGMRGQKSRSGGSTRPGFEGGQNPLYRRLPKLKGFPMVNRKKYTIINVSKLSSLPANTEVTLASLIKVGIITTDDGPLKILGDGDLNIPLKVYAAAFTASARSKIEAAGGSCEEIGPAQAVSNEDSTKE.

The interval 1 to 57 is disordered; that stretch reads MRLKDAIPKKGSQQRGRRVGRGISAGQGASCGKGMRGQKSRSGGSTRPGFEGGQNPL. Positions 23–35 are enriched in gly residues; it reads ISAGQGASCGKGM.

The protein belongs to the universal ribosomal protein uL15 family. As to quaternary structure, part of the 50S ribosomal subunit.

In terms of biological role, binds to the 23S rRNA. The protein is Large ribosomal subunit protein uL15 of Trichodesmium erythraeum (strain IMS101).